Here is a 315-residue protein sequence, read N- to C-terminus: Transaldolase (315 aa).

The Schiff-base intermediate with substrate role is filled by Lys-125.

Belongs to the transaldolase family. Type 1 subfamily. Homodimer.

It is found in the cytoplasm. The enzyme catalyses D-sedoheptulose 7-phosphate + D-glyceraldehyde 3-phosphate = D-erythrose 4-phosphate + beta-D-fructose 6-phosphate. It participates in carbohydrate degradation; pentose phosphate pathway; D-glyceraldehyde 3-phosphate and beta-D-fructose 6-phosphate from D-ribose 5-phosphate and D-xylulose 5-phosphate (non-oxidative stage): step 2/3. In terms of biological role, transaldolase is important for the balance of metabolites in the pentose-phosphate pathway. The protein is Transaldolase of Polaromonas naphthalenivorans (strain CJ2).